A 419-amino-acid chain; its full sequence is Putative nucleobase-ascorbate transporter 9 (419 aa).

Positions Met-1–Gly-22 are enriched in gly residues. Residues Met-1–Glu-28 are disordered. The next 10 helical transmembrane spans lie at Leu-64–Gly-84, Val-91–Thr-111, Leu-113–Ser-133, Ile-153–Trp-173, Ser-184–Val-204, Gly-220–Val-240, Ser-273–Ala-293, Arg-313–Ala-333, Phe-334–Val-354, and Phe-370–Phe-390.

This sequence belongs to the nucleobase:cation symporter-2 (NCS2) (TC 2.A.40) family.

Its subcellular location is the membrane. In Arabidopsis thaliana (Mouse-ear cress), this protein is Putative nucleobase-ascorbate transporter 9 (NAT9).